Reading from the N-terminus, the 461-residue chain is D-phenylhydantoinase (461 aa).

A divalent metal cation contacts are provided by His-59, His-61, and Lys-151. N6-carboxylysine is present on Lys-151. Tyr-156 lines the substrate pocket. A divalent metal cation contacts are provided by His-182 and His-239. Position 286 (Ser-286) interacts with substrate. A divalent metal cation is bound at residue Asp-313. Asn-335 is a substrate binding site.

It belongs to the metallo-dependent hydrolases superfamily. Hydantoinase/dihydropyrimidinase family. In terms of assembly, homotetramer. A divalent metal cation serves as cofactor. Post-translationally, carboxylation allows a single lysine to coordinate two divalent metal cations.

The catalysed reaction is D-5-phenylhydantoin + H2O = N-carbamoyl-D-phenylglycine + H(+). Catalyzes the stereospecific hydrolysis of the cyclic amide bond of D-hydantoin derivatives with an aromatic side chains at the 5'-position. Has no activity on dihydropyrimidines. The physiological function is unknown. The protein is D-phenylhydantoinase of Escherichia coli (strain 55989 / EAEC).